The chain runs to 266 residues: 2-C-methyl-D-erythritol 4-phosphate cytidylyltransferase (266 aa).

Residues 229-266 (NRDCGPGTRDPESAHPQSSVSASAFSGPGSRAPGPEEI) are disordered. A compositionally biased stretch (polar residues) spans 243–252 (HPQSSVSASA).

This sequence belongs to the IspD/TarI cytidylyltransferase family. IspD subfamily.

It carries out the reaction 2-C-methyl-D-erythritol 4-phosphate + CTP + H(+) = 4-CDP-2-C-methyl-D-erythritol + diphosphate. Its pathway is isoprenoid biosynthesis; isopentenyl diphosphate biosynthesis via DXP pathway; isopentenyl diphosphate from 1-deoxy-D-xylulose 5-phosphate: step 2/6. Catalyzes the formation of 4-diphosphocytidyl-2-C-methyl-D-erythritol from CTP and 2-C-methyl-D-erythritol 4-phosphate (MEP). The protein is 2-C-methyl-D-erythritol 4-phosphate cytidylyltransferase of Xanthomonas axonopodis pv. citri (strain 306).